The following is a 998-amino-acid chain: Type II restriction enzyme and methyltransferase RM.Eco57I (998 aa).

The protein in the C-terminal section; belongs to the N(4)/N(6)-methyltransferase family. In terms of assembly, monomer.

It carries out the reaction Endonucleolytic cleavage of DNA to give specific double-stranded fragments with terminal 5'-phosphates.. The enzyme catalyses a 2'-deoxyadenosine in DNA + S-adenosyl-L-methionine = an N(6)-methyl-2'-deoxyadenosine in DNA + S-adenosyl-L-homocysteine + H(+). With respect to regulation, mg(2+) is absolutely required for DNA restriction. Its function is as follows. An E, G and S subtype restriction enzyme that recognizes the (non-palindromic) double-stranded sequence 5'-CTGAAG-3' and cleaves respectively 22 bases after C-1 and 14 bases before C'-1; cleavage of lambda DNA is never complete. Also acts as a methylase that causes specific methylation on A-5 in 5'-CTGAAG-3', the other strand is methylated by the M.Eco57I methylase. This is Type II restriction enzyme and methyltransferase RM.Eco57I from Escherichia coli.